The following is a 348-amino-acid chain: Hereditary hemochromatosis protein (348 aa).

An N-terminal signal peptide occupies residues 1-22; sequence MGPRARPALLLLMLLQTAVLQG. The segment at 23–114 is alpha-1; the sequence is RLLRSHSLHY…IMENHNHSKE (92 aa). At 23-306 the chain is on the extracellular side; the sequence is RLLRSHSLHY…WEPSPSGTLV (284 aa). N-linked (GlcNAc...) asparagine glycosylation is found at Asn110, Asn130, and Asn234. Residues 115-205 are alpha-2; sequence SHTLQVILGC…ELGRGVLDQQ (91 aa). Disulfide bonds link Cys124–Cys187 and Cys225–Cys282. Positions 206–297 are alpha-3; sequence VPPLVKVTHH…GLDQPLIVIW (92 aa). Residues 207 to 298 enclose the Ig-like C1-type domain; that stretch reads PPLVKVTHHV…LDQPLIVIWE (92 aa). The tract at residues 298-306 is connecting peptide; it reads EPSPSGTLV. Residues 307–330 form a helical membrane-spanning segment; it reads IGVISGIAVFVVILFIGILFIILR. The Cytoplasmic segment spans residues 331-348; the sequence is KRQGSRGAMGHYVLAERE.

This sequence belongs to the MHC class I family. Binds TFR through the extracellular domain in a pH-dependent manner. In terms of tissue distribution, expressed in all tissues tested except brain.

The protein localises to the cell membrane. In terms of biological role, binds to transferrin receptor (TFR) and reduces its affinity for iron-loaded transferrin. The sequence is that of Hereditary hemochromatosis protein (HFE) from Homo sapiens (Human).